The chain runs to 572 residues: Dihydroxy-acid dehydratase (572 aa).

Residue C54 participates in [2Fe-2S] cluster binding. D86 serves as a coordination point for Mg(2+). [2Fe-2S] cluster is bound at residue C127. 2 residues coordinate Mg(2+): D128 and K129. At K129 the chain carries N6-carboxylysine. C199 lines the [2Fe-2S] cluster pocket. Residue E449 participates in Mg(2+) binding. The active-site Proton acceptor is S475.

This sequence belongs to the IlvD/Edd family. As to quaternary structure, homodimer. The cofactor is [2Fe-2S] cluster. Requires Mg(2+) as cofactor.

The catalysed reaction is (2R)-2,3-dihydroxy-3-methylbutanoate = 3-methyl-2-oxobutanoate + H2O. It catalyses the reaction (2R,3R)-2,3-dihydroxy-3-methylpentanoate = (S)-3-methyl-2-oxopentanoate + H2O. The protein operates within amino-acid biosynthesis; L-isoleucine biosynthesis; L-isoleucine from 2-oxobutanoate: step 3/4. Its pathway is amino-acid biosynthesis; L-valine biosynthesis; L-valine from pyruvate: step 3/4. Functions in the biosynthesis of branched-chain amino acids. Catalyzes the dehydration of (2R,3R)-2,3-dihydroxy-3-methylpentanoate (2,3-dihydroxy-3-methylvalerate) into 2-oxo-3-methylpentanoate (2-oxo-3-methylvalerate) and of (2R)-2,3-dihydroxy-3-methylbutanoate (2,3-dihydroxyisovalerate) into 2-oxo-3-methylbutanoate (2-oxoisovalerate), the penultimate precursor to L-isoleucine and L-valine, respectively. This Pelagibacter ubique (strain HTCC1062) protein is Dihydroxy-acid dehydratase.